A 983-amino-acid polypeptide reads, in one-letter code: MAAGLWALLLPLAAAVYEDQVGKFDWRQQYVGKLKFASLEAAQGSKKLLVGTEKNVVAALNSRSGEILWRHADKATPEGAIDAMLIHGQDAITVSSAGRILRSWETNIGGLNWETSLDTGSFQTASLVGLQDAVKYVAVLKKAAISLHYLSNGHQKWVEHLPESENTQYQMLYSRGAGVIHVLGVVPQSHLKVLTLSVEDGEVIEQTKVAAPWLKSLNGACGVVGEAVLVCADTATHSLYVCSLETEQEMKQIPLQSLDLEFADGFQPRVLATQPSVINASRTQFFLQLSPGHFSLLQCKQGLLSHLRDFQQAALVSFATTGEKTVAAVLTCRNELKPASSDGLHGNALEDSQKQEALTCSNQTYNINLYLVETGQRLLDTTITFNLEQNGAKPEQLYIQVFLKKDDSVGYRALVQTEDHMLMFLQQPGKVVWSREESLAEVVSLEMVDLPLTGAQAELEGEFGKKADGLLGMFLKRLSSQLILLQAWTAHLWKMFYDARKPRSQIKNEINIDNLARDEFNLQKMMVMVTASGKLFGIESSSGTILWKQYLRNVRPGASLKLMVQRTTAHFPHPPQCTLLVKDKETKMSFLYVFNPIFGKRSQVAPPVLKRPVLQTLLLPIMDQDYAKVLLLIDDEYKVTAFPATKNVLRQLEEMAHSIFFYLVDAEQGKLSGFRLKKDLTTEESWQVAIPTEVQRIVTVKGKRSSEHVHSQGRVMGDRSVLYKSLNPNLLAVVTESTDTHHERTFVGIYLIDGVTGRIIHSSVQKKAKGPVHIVHSENWVVYQYWNTKARRNEFTVLELYEGTEQYNATAFSSLDRPLLPQVLQQSYIFPSAISAMEATITERGITSRHLLIGLPSGAILSLPKALLDPRRPEIPTEQSREENLIPYSPDVQIHAERFINYNQTVSQIRGIYTSPSGLESTCLVVAYGLDIYQTRVYPSKQFDVLKDDYDYVLISSVLFGLVFATMITKRLAQVKLLNRAWR.

The signal sequence occupies residues 1–16 (MAAGLWALLLPLAAAV). Residues 17-952 (YEDQVGKFDW…FDVLKDDYDY (936 aa)) are Lumenal-facing. The cysteines at positions 221 and 231 are disulfide-linked. N279 carries N-linked (GlcNAc...) asparagine glycosylation. An intrachain disulfide couples C332 to C360. N362, N808, and N903 each carry an N-linked (GlcNAc...) asparagine glycan. A helical transmembrane segment spans residues 953 to 973 (VLISSVLFGLVFATMITKRLA). The Cytoplasmic segment spans residues 974–983 (QVKLLNRAWR).

This sequence belongs to the EMC1 family. In terms of assembly, component of the ER membrane protein complex (EMC).

The protein localises to the endoplasmic reticulum membrane. Its function is as follows. Part of the endoplasmic reticulum membrane protein complex (EMC) that enables the energy-independent insertion into endoplasmic reticulum membranes of newly synthesized membrane proteins. Preferentially accommodates proteins with transmembrane domains that are weakly hydrophobic or contain destabilizing features such as charged and aromatic residues. Involved in the cotranslational insertion of multi-pass membrane proteins in which stop-transfer membrane-anchor sequences become ER membrane spanning helices. It is also required for the post-translational insertion of tail-anchored/TA proteins in endoplasmic reticulum membranes. By mediating the proper cotranslational insertion of N-terminal transmembrane domains in an N-exo topology, with translocated N-terminus in the lumen of the ER, controls the topology of multi-pass membrane proteins like the G protein-coupled receptors. By regulating the insertion of various proteins in membranes, it is indirectly involved in many cellular processes. The protein is ER membrane protein complex subunit 1 (EMC1) of Gallus gallus (Chicken).